The primary structure comprises 436 residues: GTPase Der (436 aa).

EngA-type G domains lie at 4–167 (PVVA…PEVE) and 174–350 (VRVA…EQRT). GTP is bound by residues 10–17 (GRPNVGKS), 57–61 (DTGGL), 120–123 (NKVD), 180–187 (GRPNVGKS), 227–231 (DTAGL), and 292–295 (NKWD). Residues 351 to 435 (RRISTSEVND…PLRIILRRKN (85 aa)) enclose the KH-like domain.

The protein belongs to the TRAFAC class TrmE-Era-EngA-EngB-Septin-like GTPase superfamily. EngA (Der) GTPase family. As to quaternary structure, associates with the 50S ribosomal subunit.

In terms of biological role, GTPase that plays an essential role in the late steps of ribosome biogenesis. The polypeptide is GTPase Der (Gemmatimonas aurantiaca (strain DSM 14586 / JCM 11422 / NBRC 100505 / T-27)).